The sequence spans 308 residues: Taste receptor type 2 member 41 (308 aa).

Residues 1–6 lie on the Extracellular side of the membrane; the sequence is MLSTVS. A helical membrane pass occupies residues 7-27; the sequence is VFFMSIFVLLCFLGILANGFI. Over 28 to 60 the chain is Cytoplasmic; the sequence is VLMLSREWLWRGRLLPSDMILLSLGTSRFCQQC. Residues 61–81 traverse the membrane as a helical segment; it reads VGLVNSFYYSLHLVEYSRSLA. At 82–90 the chain is on the extracellular side; the sequence is RQLISLHMD. Residues 91-111 traverse the membrane as a helical segment; sequence FLNSATFWFGTWLSVLFCIKI. Over 112 to 128 the chain is Cytoplasmic; sequence ANFSHPAFLWLKWRFPA. Residues 129–149 traverse the membrane as a helical segment; it reads LVPWLLLGSILVSFIVTLMFF. The Extracellular segment spans residues 150–184; that stretch reads WGNHTVYQAFLRRKFSGNTTFKEWNRRLEIDYFMP. Residues N152 and N167 are each glycosylated (N-linked (GlcNAc...) asparagine). A helical transmembrane segment spans residues 185 to 205; that stretch reads LKLVTTSIPCSLFLVSILLLI. Over 206-239 the chain is Cytoplasmic; it reads NSLRRHSQRMQHNAHSLQDPNTQAHSRALKSLIS. Residues 240 to 260 traverse the membrane as a helical segment; sequence FLVLYALSYVSMVIDATVVIS. The Extracellular portion of the chain corresponds to 261 to 264; it reads SDNV. The chain crosses the membrane as a helical span at residues 265-285; the sequence is WYWPWQIILYLCMSVHPFILI. Over 286–308 the chain is Cytoplasmic; the sequence is TNNLKFRGTFRQLLLLARGFWVT.

The protein belongs to the G-protein coupled receptor T2R family. Expressed in subsets of taste receptor cells of the tongue and palate epithelium and exclusively in gustducin-positive cells. Expressed in 15% taste bud cells in circumvallate and foliate papillae but only in 2% in fungiform papillae. Expressed in the duodenum, antrum and fundus (part of the stomach).

The protein resides in the membrane. Its function is as follows. Receptor that may play a role in the perception of bitterness and is gustducin-linked. May play a role in sensing the chemical composition of the gastrointestinal content. The activity of this receptor may stimulate alpha gustducin, mediate PLC-beta-2 activation and lead to the gating of TRPM5. The protein is Taste receptor type 2 member 41 (Tas2r41) of Rattus norvegicus (Rat).